The chain runs to 344 residues: Neurotrimin (344 aa).

The first 33 residues, 1–33, serve as a signal peptide directing secretion; that stretch reads MGVCGYLFLPWKCLVVVSLRLLFLVPTGVPVRS. Ig-like C2-type domains lie at 39-126, 136-218, and 222-309; these read PKAM…PKTS, PKIV…VKVT, and PPYI…ASIM. 3 N-linked (GlcNAc...) asparagine glycosylation sites follow: N44, N70, and N152. The cysteines at positions 57 and 115 are disulfide-linked. 2 cysteine pairs are disulfide-bonded: C157–C201 and C243–C295. N284, N292, and N305 each carry an N-linked (GlcNAc...) asparagine glycan. N321 carries the GPI-anchor amidated asparagine; alternate lipid modification. N-linked (GlcNAc...) asparagine; alternate glycosylation occurs at N321. Residues 322–344 constitute a propeptide, removed in mature form; it reads GTSRRAGCIWLLPLLVLHLLLKF.

This sequence belongs to the immunoglobulin superfamily. IgLON family.

The protein resides in the cell membrane. In terms of biological role, neural cell adhesion molecule. This Mus musculus (Mouse) protein is Neurotrimin (Ntm).